Here is a 29-residue protein sequence, read N- to C-terminus: Varv peptide F (29 aa).

The segment at residues 1–29 (GVPICGETCTLGTCYTAGCSCSWPVCTRN) is a cross-link (cyclopeptide (Gly-Asn)). Cystine bridges form between Cys-5/Cys-19, Cys-9/Cys-21, and Cys-14/Cys-26.

Post-translationally, this is a cyclic peptide.

Its function is as follows. Probably participates in a plant defense mechanism. Has cytotoxic activity against a variety of drug-resistant and drug-sensitive human tumor cell lines. The polypeptide is Varv peptide F (Viola arvensis (European field pansy)).